A 383-amino-acid chain; its full sequence is 8-amino-7-oxononanoate synthase (383 aa).

Substrate is bound at residue Arg-21. 108–109 (GF) provides a ligand contact to pyridoxal 5'-phosphate. His-133 provides a ligand contact to substrate. Pyridoxal 5'-phosphate contacts are provided by Ser-179, His-207, and Thr-233. N6-(pyridoxal phosphate)lysine is present on Lys-236. Thr-350 is a binding site for substrate.

Belongs to the class-II pyridoxal-phosphate-dependent aminotransferase family. BioF subfamily. In terms of assembly, homodimer. Pyridoxal 5'-phosphate serves as cofactor.

The enzyme catalyses 6-carboxyhexanoyl-[ACP] + L-alanine + H(+) = (8S)-8-amino-7-oxononanoate + holo-[ACP] + CO2. It participates in cofactor biosynthesis; biotin biosynthesis. Functionally, catalyzes the decarboxylative condensation of pimeloyl-[acyl-carrier protein] and L-alanine to produce 8-amino-7-oxononanoate (AON), [acyl-carrier protein], and carbon dioxide. This Yersinia enterocolitica serotype O:8 / biotype 1B (strain NCTC 13174 / 8081) protein is 8-amino-7-oxononanoate synthase.